A 143-amino-acid chain; its full sequence is Nucleoside diphosphate kinase (143 aa).

ATP contacts are provided by lysine 11, phenylalanine 59, arginine 87, threonine 93, arginine 104, and asparagine 114. The Pros-phosphohistidine intermediate role is filled by histidine 117.

This sequence belongs to the NDK family. As to quaternary structure, homotetramer. The cofactor is Mg(2+).

The protein localises to the cytoplasm. It catalyses the reaction a 2'-deoxyribonucleoside 5'-diphosphate + ATP = a 2'-deoxyribonucleoside 5'-triphosphate + ADP. It carries out the reaction a ribonucleoside 5'-diphosphate + ATP = a ribonucleoside 5'-triphosphate + ADP. Functionally, major role in the synthesis of nucleoside triphosphates other than ATP. The ATP gamma phosphate is transferred to the NDP beta phosphate via a ping-pong mechanism, using a phosphorylated active-site intermediate. This Edwardsiella ictaluri (strain 93-146) protein is Nucleoside diphosphate kinase.